We begin with the raw amino-acid sequence, 87 residues long: MVKDLKQEIITKYQLHEGDTGSPEVQVAILTQRINHLNEHLKIHKKDYHSGRGLLKMVGARRSLLNYLKKNDIERYRAIIQKLGLRK.

It belongs to the universal ribosomal protein uS15 family. In terms of assembly, part of the 30S ribosomal subunit. Forms a bridge to the 50S subunit in the 70S ribosome, contacting the 23S rRNA.

One of the primary rRNA binding proteins, it binds directly to 16S rRNA where it helps nucleate assembly of the platform of the 30S subunit by binding and bridging several RNA helices of the 16S rRNA. In terms of biological role, forms an intersubunit bridge (bridge B4) with the 23S rRNA of the 50S subunit in the ribosome. The protein is Small ribosomal subunit protein uS15 of Ruminiclostridium cellulolyticum (strain ATCC 35319 / DSM 5812 / JCM 6584 / H10) (Clostridium cellulolyticum).